A 441-amino-acid polypeptide reads, in one-letter code: MTSKKKQIKLGVFLAGTGHHVASWRHPDAPSDASMNLDYFKELAKTAERGKLDMLFLADSLSIDSKSHPNVLTRFEPFTLLSALAQVTSKIGLTATASTTYSEPFHIARQFASLDHLSNGRAGWNVVTSSIESTALNFSGEKHLEHHLRYQRAEEFVEIVKGLWDSWEEDAFIRNKETGEFFDKEKMHELNHKGEYFSVRGPLNVSRTPQGQPVIIQAGSSGDGKALAAKTAEVIFTAQNHLESAQEFYQSIKEQAAEFGRDPEKIAIMPGIFPIIADTEEAAQAKYKELQDLIIPSVGLQILQNYLGGIDLSAYPLDGPLPKLDAEASNAVKSRFKLVQEMAERDNMTIRELYKYVAGSRGHHIFVGTPEQLADKMQEWVDTKACDGFNIMPPLLPEGIEVFVDQVVPILQERGVFRKEYEGTTLREHFGLEKPVNRYAK.

Positions 59, 96, 146, 150, 220, and 221 each coordinate FMN.

The protein belongs to the NtaA/SnaA/DszA monooxygenase family. Homodimer. It depends on FMN as a cofactor.

The enzyme catalyses N-acetyl-S-(2-succino)-L-cysteine + NADH + O2 + H(+) = N-acetyl-L-cysteine + oxaloacetate + NAD(+) + H2O. The protein operates within amino-acid biosynthesis; L-cysteine biosynthesis. In terms of biological role, catalyzes the oxidative cleavage of the C-S bond of N-acetyl-S-(2-succino)cysteine, forming oxaloacetate and N-acetylcysteine (NAC). Is involved in a S-(2-succino)cysteine (2SC) degradation pathway that allows B.subtilis to grow on 2SC as a sole sulfur source, via its metabolization to cysteine. Shows almost no activity on S-succinylglutathione and 2SC. This is N-acetyl-S-(2-succino)cysteine monooxygenase from Bacillus subtilis (strain 168).